The following is a 413-amino-acid chain: Argininosuccinate synthase (413 aa).

8–16 lines the ATP pocket; the sequence is AYSGGLDTS. Residue tyrosine 87 participates in L-citrulline binding. ATP is bound at residue glycine 117. 3 residues coordinate L-aspartate: threonine 119, asparagine 123, and aspartate 124. L-citrulline is bound at residue asparagine 123. L-citrulline is bound by residues arginine 127, serine 175, glutamate 259, and tyrosine 271.

This sequence belongs to the argininosuccinate synthase family. Type 1 subfamily. In terms of assembly, homotetramer.

The protein localises to the cytoplasm. The enzyme catalyses L-citrulline + L-aspartate + ATP = 2-(N(omega)-L-arginino)succinate + AMP + diphosphate + H(+). The protein operates within amino-acid biosynthesis; L-arginine biosynthesis; L-arginine from L-ornithine and carbamoyl phosphate: step 2/3. This Micrococcus luteus (strain ATCC 4698 / DSM 20030 / JCM 1464 / CCM 169 / CCUG 5858 / IAM 1056 / NBRC 3333 / NCIMB 9278 / NCTC 2665 / VKM Ac-2230) (Micrococcus lysodeikticus) protein is Argininosuccinate synthase.